A 704-amino-acid polypeptide reads, in one-letter code: Ion-translocating oxidoreductase complex subunit C (704 aa).

2 consecutive 4Fe-4S ferredoxin-type domains span residues 368–397 and 407–436; these read MGAP…QQLY and KATA…VQYF. [4Fe-4S] cluster-binding residues include C377, C380, C383, C387, C416, C419, C422, and C426. The interval 536–685 is disordered; sequence RAKQAAHPMA…ADPRKAAVAA (150 aa). The segment covering 556–565 has biased composition (low complexity); the sequence is KAAVEAAIAR.

Belongs to the 4Fe4S bacterial-type ferredoxin family. RnfC subfamily. In terms of assembly, the complex is composed of six subunits: RsxA, RsxB, RsxC, RsxD, RsxE and RsxG. The cofactor is [4Fe-4S] cluster.

It localises to the cell inner membrane. Part of a membrane-bound complex that couples electron transfer with translocation of ions across the membrane. Required to maintain the reduced state of SoxR. The protein is Ion-translocating oxidoreductase complex subunit C of Salmonella dublin (strain CT_02021853).